A 534-amino-acid chain; its full sequence is Invertase (534 aa).

The signal sequence occupies residues 1–21; sequence MKITTLVASILMSVLLEPVIA. Residues 46–49 and Q67 contribute to the substrate site; that span reads WLND. Residue D49 is part of the active site. N71 is a glycosylation site (N-linked (GlcNAc...) asparagine). 109 to 110 contributes to the substrate binding site; that stretch reads FS. 3 N-linked (GlcNAc...) asparagine glycosylation sites follow: N118, N119, and N172. 177 to 178 contributes to the substrate binding site; sequence RD. N218 carries N-linked (GlcNAc...) asparagine glycosylation. E229 and W313 together coordinate substrate. N-linked (GlcNAc...) asparagine glycosylation is found at N375, N381, N392, and N420.

Belongs to the glycosyl hydrolase 32 family.

The enzyme catalyses Hydrolysis of terminal non-reducing beta-D-fructofuranoside residues in beta-D-fructofuranosides.. The polypeptide is Invertase (INV) (Debaryomyces hansenii (strain ATCC 36239 / CBS 767 / BCRC 21394 / JCM 1990 / NBRC 0083 / IGC 2968) (Yeast)).